The following is a 290-amino-acid chain: uncharacterized protein (290 aa).

Residues 1 to 25 (MNKKSILSKTSLGSLFFLFGTALSA) form the signal peptide. A lipid anchor (N-palmitoyl cysteine) is attached at Cys26. The S-diacylglycerol cysteine moiety is linked to residue Cys26. A disordered region spans residues 183 to 203 (GTDSKGSGSNNQNGGVTEKDF). The span at 186-197 (SKGSGSNNQNGG) shows a compositional bias: low complexity.

The protein belongs to the MG439/MG440 family.

Its subcellular location is the cell membrane. This is an uncharacterized protein from Mycoplasma pneumoniae (strain ATCC 29342 / M129 / Subtype 1) (Mycoplasmoides pneumoniae).